Consider the following 431-residue polypeptide: Histidinol dehydrogenase (431 aa).

NAD(+) is bound by residues tyrosine 124, glutamine 187, and asparagine 210. Substrate is bound by residues serine 236, glutamine 258, and histidine 261. Positions 258 and 261 each coordinate Zn(2+). Catalysis depends on proton acceptor residues glutamate 325 and histidine 326. Residues histidine 326, aspartate 359, glutamate 413, and histidine 418 each contribute to the substrate site. A Zn(2+)-binding site is contributed by aspartate 359. Zn(2+) is bound at residue histidine 418.

Belongs to the histidinol dehydrogenase family. Zn(2+) serves as cofactor.

It carries out the reaction L-histidinol + 2 NAD(+) + H2O = L-histidine + 2 NADH + 3 H(+). Its pathway is amino-acid biosynthesis; L-histidine biosynthesis; L-histidine from 5-phospho-alpha-D-ribose 1-diphosphate: step 9/9. Functionally, catalyzes the sequential NAD-dependent oxidations of L-histidinol to L-histidinaldehyde and then to L-histidine. This chain is Histidinol dehydrogenase, found in Legionella pneumophila (strain Paris).